Here is a 689-residue protein sequence, read N- to C-terminus: Glycine--tRNA ligase beta subunit (689 aa).

This sequence belongs to the class-II aminoacyl-tRNA synthetase family. As to quaternary structure, tetramer of two alpha and two beta subunits.

Its subcellular location is the cytoplasm. The catalysed reaction is tRNA(Gly) + glycine + ATP = glycyl-tRNA(Gly) + AMP + diphosphate. The polypeptide is Glycine--tRNA ligase beta subunit (Salmonella agona (strain SL483)).